Here is a 153-residue protein sequence, read N- to C-terminus: Large ribosomal subunit protein uL30 (153 aa).

This sequence belongs to the universal ribosomal protein uL30 family. As to quaternary structure, part of the 50S ribosomal subunit.

This Methanocella arvoryzae (strain DSM 22066 / NBRC 105507 / MRE50) protein is Large ribosomal subunit protein uL30.